The following is a 442-amino-acid chain: MKGAMEPEPEVLLQEARENVEAAQSYRRELGQRLQGLREAQRQIKESASQTRDVLKQHFSDLKGTLGKLLDERLVTLLQEVDTIEQETIKPLDDCQKLIEHGVNTADDLVREGEIAILGGIEEESDKLWNFTKKASHIQLDSLPEVPLLVDVPCLSAQLDDSILNIVKDHIFKHGTVASRPPVQIEELIEKPGGIIVRWCKVDDDFTAQDYRLQFRKCTANHFEDVYVGSETEFIVLHIDPNVDYQFRVCARGDGRQEWSPWSVPQTGHSTLVPHEWTTGFEGYSLSSRRNIALRNDAESSGVLYSSAPTYFCGQTLTFRVETVGQPDRRDSIGVCAERQNGYESLQRDQAVCISTNGAVFVNGKEMTNQLPAVTSGSTVTFDIEAVTLGTSNSHEGGNAKLRVTISSNNREVVFDWLLEQACGPLYFGCSFFYPGWKVLVF.

Residues 10–46 adopt a coiled-coil conformation; sequence EVLLQEARENVEAAQSYRRELGQRLQGLREAQRQIKE. The Fibronectin type-III domain maps to 181-274; sequence PPVQIEELIE…PQTGHSTLVP (94 aa).

It belongs to the cytokine receptor-like factor 3 family.

The protein localises to the cytoplasm. Functionally, may play a role in the negative regulation of cell cycle progression. In Mus musculus (Mouse), this protein is Cytokine receptor-like factor 3 (Crlf3).